Here is an 84-residue protein sequence, read N- to C-terminus: Agaphelin (84 aa).

The signal sequence occupies residues 1–26; it reads MKMRVHLLAVSVLLVVLALQTTPAEA. The 54-residue stretch at 29–82 folds into the Kazal-like domain; that stretch reads NSEMATCACQLIYRPVCASNNESYSNECVLKCASETPTGRSIGLHKVKDGNCNG. 3 disulfide bridges follow: Cys-35–Cys-60, Cys-37–Cys-56, and Cys-45–Cys-80. Asn-49 carries N-linked (GlcNAc...) asparagine glycosylation.

In terms of assembly, interacts with human ELANE.

It is found in the secreted. Functions as a slow and tight inhibitor of host neutrophil elastase (ELANE). Inhibits host proteinase 3 (PRTN3) and chymotrypsin. Does not inhibit other host proteases involved in coagulation or inflammation, such as cathepsin G (CTSG), trypsin, chymase, matriptase, beta-tryptase, kallikrein, urokinase-type plasminogen activator (PLAU), coagulation factors Xa (F10), XIa (F11), XIIa (F12), plasmin (PLG), thrombin (F2) and tissue-type plasminogen activator (PLAT). Inhibits host neutrophil chemotaxis induced by N-formylmethionine-leucyl-phenylalanine (fMLP) in vitro. Inhibits ELANE-mediated potentiation of platelet aggregation induced by CTSG in the host. Does not affect CTSG- or collagen-induced platelet aggregation. Blocks cleavage of tissue factor pathway inhibitor (TFPI) by ELANE in the host. Inhibits neutrophil-induced coagulation in the host by interfering with neutrophil extracellular traps (NET) formation. Exhibits anti-inflammatory activity. Reduces ischemia-induced activation of MAPK and NF-kappa-B pathways in the host. Decreases CCL2 and IL8 production in IL4- or lipopolysaccharide (LPS)-stimulated host epithelial cells. Reduces caspase-3 (CASP3)-dependent apoptosis in damaged host tissues. The sequence is that of Agaphelin from Anopheles gambiae (African malaria mosquito).